The chain runs to 214 residues: Protein transport protein SEC22 (214 aa).

Residues Met1–Ser192 are Cytoplasmic-facing. Positions Leu6 to Leu117 constitute a Longin domain. Residues Asn132 to Ser192 form the v-SNARE coiled-coil homology domain. At Ser160 the chain carries Phosphoserine. The chain crosses the membrane as a helical; Anchor for type IV membrane protein span at residues Gln193–Leu213. Position 214 (Lys214) is a topological domain, vesicular.

The protein belongs to the synaptobrevin family. In terms of assembly, component of two distinct SNARE complexes consisting of SED5, BOS1, BET1 and SEC22 or UFE1, USE1, SEC20 and SEC22. YKT6 can probably replace SEC22 as subunit of either complex. Interacts with SEC24, YIF1 and YIP1.

It localises to the membrane. It is found in the endoplasmic reticulum membrane. Its subcellular location is the golgi apparatus membrane. Nonessential SNARE involved in targeting and fusion of ER-derived transport vesicles with the Golgi complex as well as Golgi-derived retrograde transport vesicles with the ER. This Saccharomyces cerevisiae (strain ATCC 204508 / S288c) (Baker's yeast) protein is Protein transport protein SEC22 (SEC22).